Reading from the N-terminus, the 470-residue chain is Argininosuccinate lyase (470 aa).

Belongs to the lyase 1 family. Argininosuccinate lyase subfamily.

Its subcellular location is the cytoplasm. The enzyme catalyses 2-(N(omega)-L-arginino)succinate = fumarate + L-arginine. The protein operates within amino-acid biosynthesis; L-arginine biosynthesis; L-arginine from L-ornithine and carbamoyl phosphate: step 3/3. This chain is Argininosuccinate lyase, found in Synechococcus sp. (strain WH7803).